The primary structure comprises 77 residues: Acyl carrier protein (77 aa).

In terms of domain architecture, Carrier spans 2 to 77; that stretch reads SDVAKRVKEI…DAIDYITEHT (76 aa). S37 carries the O-(pantetheine 4'-phosphoryl)serine modification.

The protein belongs to the acyl carrier protein (ACP) family. In terms of processing, 4'-phosphopantetheine is transferred from CoA to a specific serine of apo-ACP by AcpS. This modification is essential for activity because fatty acids are bound in thioester linkage to the sulfhydryl of the prosthetic group.

The protein resides in the cytoplasm. The protein operates within lipid metabolism; fatty acid biosynthesis. Its function is as follows. Carrier of the growing fatty acid chain in fatty acid biosynthesis. The sequence is that of Acyl carrier protein from Trichlorobacter lovleyi (strain ATCC BAA-1151 / DSM 17278 / SZ) (Geobacter lovleyi).